We begin with the raw amino-acid sequence, 460 residues long: Methylenetetrahydrofolate--tRNA-(uracil-5-)-methyltransferase TrmFO (460 aa).

15-20 (GAGLAG) is a binding site for FAD.

It belongs to the MnmG family. TrmFO subfamily. Requires FAD as cofactor.

The protein localises to the cytoplasm. It catalyses the reaction uridine(54) in tRNA + (6R)-5,10-methylene-5,6,7,8-tetrahydrofolate + NADH + H(+) = 5-methyluridine(54) in tRNA + (6S)-5,6,7,8-tetrahydrofolate + NAD(+). The catalysed reaction is uridine(54) in tRNA + (6R)-5,10-methylene-5,6,7,8-tetrahydrofolate + NADPH + H(+) = 5-methyluridine(54) in tRNA + (6S)-5,6,7,8-tetrahydrofolate + NADP(+). In terms of biological role, catalyzes the folate-dependent formation of 5-methyl-uridine at position 54 (M-5-U54) in all tRNAs. The sequence is that of Methylenetetrahydrofolate--tRNA-(uracil-5-)-methyltransferase TrmFO from Synechococcus sp. (strain CC9902).